Reading from the N-terminus, the 353-residue chain is UPF0283 membrane protein YcjF (353 aa).

A run of 3 helical transmembrane segments spans residues 70–90 (MVMG…VQWT), 100–120 (VALG…GSVV), and 213–233 (ESTL…FIAW).

The protein belongs to the UPF0283 family.

The protein resides in the cell inner membrane. The sequence is that of UPF0283 membrane protein YcjF from Salmonella schwarzengrund (strain CVM19633).